The sequence spans 208 residues: Small ribosomal subunit protein uS4 (208 aa).

In terms of domain architecture, S4 RNA-binding spans 97–158 (TRLDNVIYRM…RAQKYLCVQE (62 aa)).

It belongs to the universal ribosomal protein uS4 family. As to quaternary structure, part of the 30S ribosomal subunit. Contacts protein S5. The interaction surface between S4 and S5 is involved in control of translational fidelity.

Functionally, one of the primary rRNA binding proteins, it binds directly to 16S rRNA where it nucleates assembly of the body of the 30S subunit. In terms of biological role, with S5 and S12 plays an important role in translational accuracy. In Xylella fastidiosa (strain 9a5c), this protein is Small ribosomal subunit protein uS4.